The sequence spans 158 residues: Ribosomal RNA large subunit methyltransferase H (158 aa).

S-adenosyl-L-methionine-binding positions include L74, G105, and 124 to 129; that span reads LGPLTL.

The protein belongs to the RNA methyltransferase RlmH family. Homodimer.

The protein resides in the cytoplasm. The catalysed reaction is pseudouridine(1915) in 23S rRNA + S-adenosyl-L-methionine = N(3)-methylpseudouridine(1915) in 23S rRNA + S-adenosyl-L-homocysteine + H(+). Specifically methylates the pseudouridine at position 1915 (m3Psi1915) in 23S rRNA. In Xylella fastidiosa (strain Temecula1 / ATCC 700964), this protein is Ribosomal RNA large subunit methyltransferase H.